A 372-amino-acid polypeptide reads, in one-letter code: Aminomethyltransferase (372 aa).

It belongs to the GcvT family. As to quaternary structure, the glycine cleavage system is composed of four proteins: P, T, L and H.

It carries out the reaction N(6)-[(R)-S(8)-aminomethyldihydrolipoyl]-L-lysyl-[protein] + (6S)-5,6,7,8-tetrahydrofolate = N(6)-[(R)-dihydrolipoyl]-L-lysyl-[protein] + (6R)-5,10-methylene-5,6,7,8-tetrahydrofolate + NH4(+). In terms of biological role, the glycine cleavage system catalyzes the degradation of glycine. This is Aminomethyltransferase from Synechocystis sp. (strain ATCC 27184 / PCC 6803 / Kazusa).